The chain runs to 340 residues: Guanine nucleotide-binding protein G(I)/G(S)/G(T) subunit beta-2 (340 aa).

N-acetylserine is present on S2. WD repeat units lie at residues 53 to 83 (GHLA…IIWD), 95 to 125 (LRSS…SIYS), 141 to 170 (GHTG…ALWD), 182 to 212 (GHSG…KLWD), 224 to 254 (GHES…RLFD), 268 to 298 (NIIC…NIWD), and 310 to 340 (GHDN…KIWN). Position 239 is a phosphotyrosine (Y239).

This sequence belongs to the WD repeat G protein beta family. In terms of assembly, g proteins are composed of 3 units, alpha, beta and gamma. In this context, interacts with GNAI2 and GNG2. Interacts with ARHGEF18 and RASD2. Interacts with ATXN10. Interacts with SCN8A. As to expression, expressed in all cardiac subcompartments and in the brain, with highest levels in the atrioventricular node and brain.

The protein localises to the cytoplasm. The protein resides in the perinuclear region. It localises to the cell membrane. Guanine nucleotide-binding proteins (G proteins) are involved as a modulator or transducer in various transmembrane signaling systems. The beta and gamma chains are required for the GTPase activity, for replacement of GDP by GTP, and for G protein-effector interaction. This is Guanine nucleotide-binding protein G(I)/G(S)/G(T) subunit beta-2 (GNB2) from Homo sapiens (Human).